Consider the following 346-residue polypeptide: MIILGFESSCDETGVAAVCTERGLLAHALHTQIAMHQEYGGVVPELASRDHIRRVVPLTRQVLAEAGLTLADVGAVAYTAGPGLAGALLVGASVAQALAWSRALPAIGIHHLEGHLLSPLLAEPRPEFPFVALLVSGGHTQLMLVDGVGRYELLGETLDDAAGEAFDKSAKLMGLGYPGGPALARLAEQGDASRYDLPRPMLHSGDLDFSFSGLKTAVLTRVKAATRDGGELGEQDRADLAAATQAAIVEVLAAKAIRALKQTGLRRLVVAGGVGANALLRAHLARALKPLRAEAYFPPLSLCTDNGAMIAFAAAERVKAGLADLREGDHAFTVRPRWDLADIQAG.

Fe cation is bound by residues His111 and His115. Substrate is bound by residues 134–138 (LVSGG), Asp167, Gly180, and Asn277. Asp305 lines the Fe cation pocket.

The protein belongs to the KAE1 / TsaD family. It depends on Fe(2+) as a cofactor.

The protein resides in the cytoplasm. It carries out the reaction L-threonylcarbamoyladenylate + adenosine(37) in tRNA = N(6)-L-threonylcarbamoyladenosine(37) in tRNA + AMP + H(+). Functionally, required for the formation of a threonylcarbamoyl group on adenosine at position 37 (t(6)A37) in tRNAs that read codons beginning with adenine. Is involved in the transfer of the threonylcarbamoyl moiety of threonylcarbamoyl-AMP (TC-AMP) to the N6 group of A37, together with TsaE and TsaB. TsaD likely plays a direct catalytic role in this reaction. The polypeptide is tRNA N6-adenosine threonylcarbamoyltransferase (Bordetella pertussis (strain Tohama I / ATCC BAA-589 / NCTC 13251)).